The following is a 247-amino-acid chain: Mast cell protease 2 (247 aa).

Residues 1–18 (MQALLFLMALLLPSGAGA) form the signal peptide. Residues 19-20 (EE) constitute a propeptide, activation peptide. A Peptidase S1 domain is found at 21 to 244 (IIGGVESIPH…YVPWINAVIN (224 aa)). A disulfide bridge connects residues Cys-50 and Cys-66. Residues His-65 and Asp-109 each act as charge relay system in the active site. 2 disulfide bridges follow: Cys-143/Cys-208 and Cys-174/Cys-187. Residue Ser-202 is the Charge relay system of the active site.

Belongs to the peptidase S1 family. Granzyme subfamily.

Its function is as follows. This enzyme, isolated from small intestine, specifically inactivates the apo forms of a certain group of intracellular pyridoxal phosphate-requiring enzymes. It has chymotrypsin-like specificity towards small substrates. This chain is Mast cell protease 2 (Mcpt2), found in Rattus norvegicus (Rat).